We begin with the raw amino-acid sequence, 642 residues long: Threonine--tRNA ligase (642 aa).

In terms of domain architecture, TGS spans 1–61; it reads MPVITLPDGS…ENDATLSIIT (61 aa). The catalytic stretch occupies residues 243-534; sequence DHRKIGKQLD…LTEEFAGFFP (292 aa). C334, H385, and H511 together coordinate Zn(2+).

The protein belongs to the class-II aminoacyl-tRNA synthetase family. In terms of assembly, homodimer. The cofactor is Zn(2+).

It localises to the cytoplasm. The catalysed reaction is tRNA(Thr) + L-threonine + ATP = L-threonyl-tRNA(Thr) + AMP + diphosphate + H(+). Catalyzes the attachment of threonine to tRNA(Thr) in a two-step reaction: L-threonine is first activated by ATP to form Thr-AMP and then transferred to the acceptor end of tRNA(Thr). Also edits incorrectly charged L-seryl-tRNA(Thr). In Salmonella agona (strain SL483), this protein is Threonine--tRNA ligase.